A 181-amino-acid polypeptide reads, in one-letter code: Probable mitochondrial import inner membrane translocase subunit tim-17B.1 (181 aa).

The next 3 helical transmembrane spans lie at 17–37, 61–81, and 109–129; these read IGSAFAMGLVGGSIFQAFGGY, GVQFAAWGGMFSTIDCCLVAI, and VMAGSAILGSVILAMIEGVGL. The tract at residues 137–181 is disordered; the sequence is AMMDPTQPPPEALDDPRSLGQKSQAEPGLDQTRPFGIPTGLPNLS.

It belongs to the Tim17/Tim22/Tim23 family.

It is found in the mitochondrion inner membrane. Functionally, essential component of the TIM23 complex, a complex that mediates the translocation of transit peptide-containing proteins across the mitochondrial inner membrane. This Caenorhabditis elegans protein is Probable mitochondrial import inner membrane translocase subunit tim-17B.1.